The following is a 307-amino-acid chain: MKLIIATRKSQLALWQSEHVAQILKNTHQIEVLLEGFKTKGDVLLDSPLAKIGGKGLFTKELEESMLRKEAHLAVHSLKDVPSFFPRGLVLAAVSKREQSNDAMLSQNYKDFLSLPKGAKIGTTSLRRKMQLLLLRPDLEIISLRGNVNSRIEKLKNNDFDAIILAMAGIKRLNLDKQVNFVYEFSKDELIPAASQGALGIESINDEKILELLKCLNDENALIETSIEREFIATLEGGCQVPIGINAELLGDEICVRAVLGLPDGSEILKDKRMIKKNDFKGFGESLAKEFIAKGAKELLKKAESMI.

Position 239 is an S-(dipyrrolylmethanemethyl)cysteine (cysteine 239).

Belongs to the HMBS family. Monomer. Requires dipyrromethane as cofactor.

It carries out the reaction 4 porphobilinogen + H2O = hydroxymethylbilane + 4 NH4(+). The protein operates within porphyrin-containing compound metabolism; protoporphyrin-IX biosynthesis; coproporphyrinogen-III from 5-aminolevulinate: step 2/4. Its function is as follows. Tetrapolymerization of the monopyrrole PBG into the hydroxymethylbilane pre-uroporphyrinogen in several discrete steps. In Campylobacter jejuni subsp. jejuni serotype O:6 (strain 81116 / NCTC 11828), this protein is Porphobilinogen deaminase.